The sequence spans 285 residues: MKYIGAHVSAAGGLANAAIRAAEIDATAFALFTKNQRQWRAAPLTTQTIDEFKAACEKYHYTSAQILPHDSYLINLGHPVTEALEKSRDAFIDEMQRCEQLGLSLLNFHPGSHLMQISEEDCLARIAESINIALDKTQGVTAVIENTAGQGSNLGFKFEHLAAIIDGVEDKSRVGVCIDTCHAFAAGYDLRTPAECEKTFADFARTVGFKYLRGMHLNDAKSTFGSRVDRHHSLGEGNIGHDAFRWIMQDDRFDGIPLILETINPDIWAEEIAWLKAQQTEKAVA.

Zn(2+) is bound by residues His-69, His-109, Glu-145, Asp-179, His-182, His-216, Asp-229, His-231, and Glu-261.

Belongs to the AP endonuclease 2 family. Zn(2+) serves as cofactor.

The enzyme catalyses Endonucleolytic cleavage to 5'-phosphooligonucleotide end-products.. Functionally, endonuclease IV plays a role in DNA repair. It cleaves phosphodiester bonds at apurinic or apyrimidinic (AP) sites, generating a 3'-hydroxyl group and a 5'-terminal sugar phosphate. This chain is Probable endonuclease 4, found in Shigella dysenteriae serotype 1 (strain Sd197).